We begin with the raw amino-acid sequence, 350 residues long: MIQIKNLKKEYRTNNTSNLVLDNINLEIKQGEIFGIIGHSGAGKSSLLRCLNLLEQPTDGSIFIADENITKKNSKQLREFRKKVAMIFQHFNLLSSRNVFENIALPLEIQGIPKSEIKKRVFELLDLVELPNKANAYPQELSGGQKQKVAIARALALNPLVLLSDEATSALDPTSTKQILALLKRLNKELGLTIVLITHEMDVVRKICDRVAIIDKGRIAEMGKTLDVFLNPQAPVTRSFVETSIHTKVPDFIAKKLQDNPYSYDNTYPVVQLTFYGDKGKMPIIAEISRQFNATASIIQANIETIQDQIVGIAICHITGERQDWENALRFLSNQDVNLKVLGYATADNI.

An ABC transporter domain is found at 2–241 (IQIKNLKKEY…PQAPVTRSFV (240 aa)). Position 38 to 45 (38 to 45 (GHSGAGKS)) interacts with ATP.

It belongs to the ABC transporter superfamily. Methionine importer (TC 3.A.1.24) family. In terms of assembly, the complex is composed of two ATP-binding proteins (MetN), two transmembrane proteins (MetI) and a solute-binding protein (MetQ).

The protein resides in the cell inner membrane. The catalysed reaction is L-methionine(out) + ATP + H2O = L-methionine(in) + ADP + phosphate + H(+). It carries out the reaction D-methionine(out) + ATP + H2O = D-methionine(in) + ADP + phosphate + H(+). In terms of biological role, part of the ABC transporter complex MetNIQ involved in methionine import. Responsible for energy coupling to the transport system. The sequence is that of Methionine import ATP-binding protein MetN from Francisella tularensis subsp. holarctica (strain LVS).